Reading from the N-terminus, the 634-residue chain is Chaperone protein HtpG (634 aa).

The tract at residues 1 to 342 (MTVETDKQTL…SSDLSLNVSR (342 aa)) is a; substrate-binding. Residues 343 to 559 (EILQSGPVVD…QGDLGLQMRQ (217 aa)) form a b region. The tract at residues 560-634 (LLEASGQAVP…LNKLLLELSV (75 aa)) is c.

Belongs to the heat shock protein 90 family. In terms of assembly, homodimer.

It localises to the cytoplasm. Functionally, molecular chaperone. Has ATPase activity. The protein is Chaperone protein HtpG of Xanthomonas euvesicatoria pv. vesicatoria (strain 85-10) (Xanthomonas campestris pv. vesicatoria).